The primary structure comprises 417 residues: GPI mannosyltransferase 2 (417 aa).

A run of 9 helical transmembrane segments spans residues 10–30, 104–124, 142–162, 167–187, 206–226, 239–259, 312–332, 344–364, and 394–414; these read FLII…LVWL, IVLK…WIVY, LALT…LISV, IAFT…SFDV, FCFA…LFYV, ITSI…FVYF, IPNF…ITYF, YIWI…VQII, and YYVM…ACFL.

Belongs to the PIGV family.

It is found in the endoplasmic reticulum membrane. It functions in the pathway glycolipid biosynthesis; glycosylphosphatidylinositol-anchor biosynthesis. Functionally, mannosyltransferase involved in glycosylphosphatidylinositol-anchor biosynthesis. Transfers the second mannose to the glycosylphosphatidylinositol during GPI precursor assembly. This chain is GPI mannosyltransferase 2 (GPI18), found in Kluyveromyces lactis (strain ATCC 8585 / CBS 2359 / DSM 70799 / NBRC 1267 / NRRL Y-1140 / WM37) (Yeast).